The primary structure comprises 228 residues: Prolactin (228 aa).

A signal peptide spans 1 to 29 (MCTKRSSLKGSLLLLLLISSLLLSRSVDS). A disulfide bond links Cys33 and Cys40. Residues Ser55, Ser63, and Ser119 each carry the phosphoserine modification. Cystine bridges form between Cys87/Cys203 and Cys220/Cys228.

The protein belongs to the somatotropin/prolactin family. As to quaternary structure, interacts with PRLR.

The protein localises to the secreted. Functionally, prolactin acts primarily on the mammary gland by promoting lactation. The chain is Prolactin (PRL) from Isoodon macrourus (Short-nosed bandicoot).